Consider the following 169-residue polypeptide: Ureidoglycolate lyase (169 aa).

Belongs to the ureidoglycolate lyase family. Homodimer. Ni(2+) is required as a cofactor.

It catalyses the reaction (S)-ureidoglycolate = urea + glyoxylate. It functions in the pathway nitrogen metabolism; (S)-allantoin degradation. In terms of biological role, catalyzes the catabolism of the allantoin degradation intermediate (S)-ureidoglycolate, generating urea and glyoxylate. Involved in the utilization of allantoin as nitrogen source. This chain is Ureidoglycolate lyase, found in Brucella ovis (strain ATCC 25840 / 63/290 / NCTC 10512).